A 139-amino-acid polypeptide reads, in one-letter code: Small ribosomal subunit protein uS12 (139 aa).

Residues 1–55 (MPTINQLIRKGRKAKVKKSDSPALNKGYNSFKKVQTDLSSPQKRGVCTRVGTMTP) form a disordered region. The span at 32–42 (KKVQTDLSSPQ) shows a compositional bias: polar residues.

This sequence belongs to the universal ribosomal protein uS12 family. In terms of assembly, part of the 30S ribosomal subunit. Contacts proteins S8 and S17. May interact with IF1 in the 30S initiation complex.

Functionally, with S4 and S5 plays an important role in translational accuracy. Its function is as follows. Interacts with and stabilizes bases of the 16S rRNA that are involved in tRNA selection in the A site and with the mRNA backbone. Located at the interface of the 30S and 50S subunits, it traverses the body of the 30S subunit contacting proteins on the other side and probably holding the rRNA structure together. The combined cluster of proteins S8, S12 and S17 appears to hold together the shoulder and platform of the 30S subunit. The sequence is that of Small ribosomal subunit protein uS12 from Halalkalibacterium halodurans (strain ATCC BAA-125 / DSM 18197 / FERM 7344 / JCM 9153 / C-125) (Bacillus halodurans).